Here is a 298-residue protein sequence, read N- to C-terminus: uncharacterized protein (298 aa).

The next 9 helical transmembrane spans lie at 10–30 (VIYT…WKLL), 36–56 (LDIL…VLFF), 76–96 (ILSL…YIWA), 101–121 (FLLE…LLGI), 142–162 (GVII…LLAF), 179–199 (AIGL…YLLF), 212–232 (GTWL…LLFA), 243–263 (VGIL…FVYH), and 271–291 (AFTF…QVKW). 2 consecutive EamA domains span residues 17–148 (FIMW…ISAF) and 162–286 (FSFG…LFTF).

Belongs to the EamA transporter family.

It localises to the cell membrane. This is an uncharacterized protein from Bacillus subtilis (strain 168).